We begin with the raw amino-acid sequence, 507 residues long: Monocarboxylate transporter 9 (507 aa).

The Extracellular segment spans residues 1–12 (MVYRKPPDGGWG). Residues 13–33 (WVIVIVSFFTQFLCYGSPLAV) form a helical membrane-spanning segment. The Cytoplasmic segment spans residues 34-52 (GVLYLEWLDAFGEGKGKTA). A helical membrane pass occupies residues 53–73 (WVGSLANGIGLLASPVCSICV). The Extracellular segment spans residues 74–79 (SSFGAR). Residues 80-100 (PVAIFSGFMVAGGLMMSSFAP) traverse the membrane as a helical segment. Residues 101 to 102 (NI) are Cytoplasmic-facing. A helical membrane pass occupies residues 103-123 (YFLYLSYGIVVGLGCGLLYNA). The Extracellular segment spans residues 124-136 (TVTITCQYFDKRR). A helical membrane pass occupies residues 137 to 157 (GLALGLISTGSSVGLFIYAAL). Topologically, residues 158 to 163 (QRELIE) are cytoplasmic. The chain crosses the membrane as a helical span at residues 164-184 (LYGLDGCLLIVGALSLNILAC). The Extracellular portion of the chain corresponds to 185–302 (GSLMRPLESS…EETVVLFKNR (118 aa)). Residues 303 to 323 (VFSALFFAILLFDIGGFPPSL) form a helical membrane-spanning segment. Residues 324–340 (LMEDIARSANINEEDYH) lie on the Cytoplasmic side of the membrane. The helical transmembrane segment at 341–361 (MPLVSIIGIMTAIGKLILGIL) threads the bilayer. The Extracellular portion of the chain corresponds to 362-369 (ADFKWVNT). Residues 370-390 (LYLYVLTLLMMGAALLAIPFA) traverse the membrane as a helical segment. Over 391-395 (RSYFT) the chain is Cytoplasmic. The helical transmembrane segment at 396–416 (LAVLSGILGFLTGNWSIFPYV) threads the bilayer. Residues 417–430 (TTKTVGIEKLTHAY) are Extracellular-facing. The helical transmembrane segment at 431-451 (GILMFFAGLGNSLGPPIVGWF) threads the bilayer. Residues 452–460 (YDWTQEYDT) are Cytoplasmic-facing. The chain crosses the membrane as a helical span at residues 461–481 (AFYFSGFCVLLGGFLLLLAAL). Over 482-507 (PCWNACTDRSSKLPPNTYSYKVASSA) the chain is Extracellular.

The protein belongs to the major facilitator superfamily. Monocarboxylate porter (TC 2.A.1.13) family.

It is found in the cell membrane. The enzyme catalyses creatine(in) = creatine(out). It carries out the reaction (R)-carnitine(in) = (R)-carnitine(out). In terms of biological role, extracellular pH-and Na(+)-sensitive low-affinity creatine transporter. Also functions as a pH-independent carnitine efflux transporter. This chain is Monocarboxylate transporter 9 (SLC16A9), found in Gallus gallus (Chicken).